Consider the following 1161-residue polypeptide: Cingulin (1161 aa).

The interval 1–403 (MSSLSADRKP…SLIHERFCGV (403 aa)) is head. 6 disordered regions span residues 29–53 (GGFP…SPSK), 79–309 (SYGV…LGRD), 649–678 (QSEL…KRET), 699–721 (SKAI…ESNL), 739–773 (RLHS…AASR), and 1123–1161 (QSRR…TTSC). A ZIM motif is present at residues 51–65 (PSKYGVAVRVQGISG). Composition is skewed to polar residues over residues 84 to 104 (LKTQ…SPYN) and 117 to 129 (PQGS…QPSS). Positions 189–203 (NGIGSSLNGTGLNGS) are enriched in low complexity. Residues 273–305 (EASSTSPTINPYAPNTSATVPKLNSTKPSSTGS) show a composition bias toward polar residues. A coiled-coil region spans residues 413-1128 (SNMKTELEQA…RKIQQSRRST (716 aa)). The segment covering 742–751 (SSVPDSSSSD) has biased composition (low complexity). Residues 755–773 (EENRSLKTQLEESRRAASR) are compositionally biased toward basic and acidic residues. A tail region spans residues 1122–1161 (QQSRRSTLGSTLSSDEEDNYSDTKSITSILTDSPLQTTSC). The span at 1124–1134 (SRRSTLGSTLS) shows a compositional bias: low complexity. The segment covering 1143–1161 (DTKSITSILTDSPLQTTSC) has biased composition (polar residues).

It belongs to the cingulin family. In terms of assembly, homodimer.

Its subcellular location is the cell junction. It is found in the tight junction. Its function is as follows. Probably plays a role in the formation and regulation of the tight junction (TJ) paracellular permeability barrier. Note=Localizes to the apical junction complex composed of tight and adherens junctions. The protein is Cingulin of Danio rerio (Zebrafish).